Reading from the N-terminus, the 79-residue chain is Sec-independent protein translocase protein TatA (79 aa).

A helical transmembrane segment spans residues 1–21 (MGGISIWQLLIVALIVVLLFG). Residues 43 to 79 (MSSEEDKKALEDTEAAKTAQTTQQATEKKPESNKEQA) are disordered. The span at 46–57 (EEDKKALEDTEA) shows a compositional bias: basic and acidic residues. Over residues 58–67 (AKTAQTTQQA) the composition is skewed to low complexity. Residues 68-79 (TEKKPESNKEQA) show a composition bias toward basic and acidic residues.

It belongs to the TatA/E family. In terms of assembly, the Tat system comprises two distinct complexes: a TatABC complex, containing multiple copies of TatA, TatB and TatC subunits, and a separate TatA complex, containing only TatA subunits. Substrates initially bind to the TatABC complex, which probably triggers association of the separate TatA complex to form the active translocon.

The protein localises to the cell inner membrane. In terms of biological role, part of the twin-arginine translocation (Tat) system that transports large folded proteins containing a characteristic twin-arginine motif in their signal peptide across membranes. TatA could form the protein-conducting channel of the Tat system. This is Sec-independent protein translocase protein TatA from Shewanella baltica (strain OS223).